Consider the following 195-residue polypeptide: Phosphoheptose isomerase (195 aa).

The 161-residue stretch at 35 to 195 (IVSKILQAGN…IVEYNLFKME (161 aa)) folds into the SIS domain. 51–53 (NGG) is a binding site for substrate. Residues His-60 and Glu-64 each coordinate Zn(2+). Substrate-binding positions include Glu-64, 95–96 (ND), 121–123 (STS), Ser-126, and Gln-173. Residues Gln-173 and His-181 each coordinate Zn(2+).

The protein belongs to the SIS family. GmhA subfamily. The cofactor is Zn(2+).

The protein localises to the cytoplasm. It catalyses the reaction 2 D-sedoheptulose 7-phosphate = D-glycero-alpha-D-manno-heptose 7-phosphate + D-glycero-beta-D-manno-heptose 7-phosphate. Its pathway is carbohydrate biosynthesis; D-glycero-D-manno-heptose 7-phosphate biosynthesis; D-glycero-alpha-D-manno-heptose 7-phosphate and D-glycero-beta-D-manno-heptose 7-phosphate from sedoheptulose 7-phosphate: step 1/1. Catalyzes the isomerization of sedoheptulose 7-phosphate in D-glycero-D-manno-heptose 7-phosphate. The sequence is that of Phosphoheptose isomerase from Leptospira interrogans serogroup Icterohaemorrhagiae serovar copenhageni (strain Fiocruz L1-130).